Consider the following 228-residue polypeptide: MPKKAVILYSGGLDSTTCMAIAKAEGFEPYAMSFAYGQRHKAELELAKGNAKPMGAVEHMVVEFDLRKMGGSALTAEIDVPKEGVGNDIPVTYVPARNTIFLSFALGWAETLGAFDIFIGVNALDYSGYPDCRPEYIAAFETMANLATKAGVEGAGRFTIHTPLIHLTKAEIIRKGLSLGVDYGRTHSCYDPTADELACGRCDSCRLRLKGFAEAGMTDPVKYVKGEK.

Y9–M19 provides a ligand contact to ATP. 4 residues coordinate Zn(2+): C189, C199, C202, and C205.

This sequence belongs to the QueC family. The cofactor is Zn(2+).

The catalysed reaction is 7-carboxy-7-deazaguanine + NH4(+) + ATP = 7-cyano-7-deazaguanine + ADP + phosphate + H2O + H(+). Its pathway is purine metabolism; 7-cyano-7-deazaguanine biosynthesis. Its function is as follows. Catalyzes the ATP-dependent conversion of 7-carboxy-7-deazaguanine (CDG) to 7-cyano-7-deazaguanine (preQ(0)). The sequence is that of 7-cyano-7-deazaguanine synthase from Geotalea uraniireducens (strain Rf4) (Geobacter uraniireducens).